The chain runs to 157 residues: Vesicle transport protein SFT2B (157 aa).

An N-acetylmethionine modification is found at methionine 1. At 1–36 (MDKLKKVLSGQDTEDRSGLSEVVESSSLSWSTRIKG) the chain is on the cytoplasmic side. Serine 9 carries the phosphoserine modification. Residues 37–57 (FIVCFALGILCSLLGTLLLWV) form a helical membrane-spanning segment. Residues 58 to 61 (SRKG) lie on the Lumenal side of the membrane. A helical transmembrane segment spans residues 62–82 (LFAVFYTLGNITSIGSTMFLM). Residues 83-96 (GPLKQLKRMFEPTR) lie on the Cytoplasmic side of the membrane. Residues 97–117 (LIATILVLLFFVLTLCSAFLW) traverse the membrane as a helical segment. Over 118–120 (NKG) the chain is Lumenal. The helical transmembrane segment at 121 to 141 (LALIFCILQSLALTWYSLSYI) threads the bilayer. The Cytoplasmic segment spans residues 142–157 (PYARDAVKKCFAVCLT).

It belongs to the SFT2 family.

The protein localises to the membrane. Functionally, may be involved in fusion of retrograde transport vesicles derived from an endocytic compartment with the Golgi complex. The polypeptide is Vesicle transport protein SFT2B (Rattus norvegicus (Rat)).